A 560-amino-acid chain; its full sequence is Glutamate--tRNA ligase, chloroplastic/mitochondrial (560 aa).

47 to 49 (RFA) is a binding site for L-glutamate. Positions 50-60 (PSPTGNLHVGG) match the 'HIGH' region motif. Histidine 57 contributes to the ATP binding site. Residues glutamate 83, 235-239 (YNFCV), and arginine 253 contribute to the L-glutamate site. Residues glutamate 256 and 291 to 295 (KLSKR) contribute to the ATP site. The 'KMSKS' region signature appears at 291–295 (KLSKR).

It belongs to the class-I aminoacyl-tRNA synthetase family. Glutamate--tRNA ligase type 1 subfamily.

The protein resides in the plastid. It localises to the chloroplast. It is found in the mitochondrion. The catalysed reaction is tRNA(Glu) + L-glutamate + ATP = L-glutamyl-tRNA(Glu) + AMP + diphosphate. In terms of biological role, catalyzes the attachment of glutamate to tRNA(Glu) in a two-step reaction: glutamate is first activated by ATP to form Glu-AMP and then transferred to the acceptor end of tRNA(Glu). The chain is Glutamate--tRNA ligase, chloroplastic/mitochondrial from Hordeum vulgare (Barley).